A 62-amino-acid chain; its full sequence is Alpha-conotoxin Vt1.27 (62 aa).

An N-terminal signal peptide occupies residues 1–21 (MGMRMMFTVFLLVVLATTVVS). A propeptide spanning residues 22 to 40 (FTLDRASDGASAAADLVAR) is cleaved from the precursor. Cystine bridges form between C46/C52 and C47/C61.

Belongs to the conotoxin A superfamily. In terms of tissue distribution, expressed by the venom duct.

Its subcellular location is the secreted. The short (45-61) amidated synthetic peptide inhibits the rat neuronal alpha-3-beta-2/CHRNA3-CHRNB2 nicotinic acetylcholine receptor (nAChR) (IC(50)=1.16 uM). It also inhibits Cav2.2/CACNA1C voltage-gated calcium channel (IC(50)=398 nM). In vivo, when tested in rat pain models, this short amidated peptide increases the pain threshold. The protein is Alpha-conotoxin Vt1.27 of Conus planorbis (Planorbis cone).